The sequence spans 283 residues: Orotidine 5'-phosphate decarboxylase (283 aa).

Residue lysine 97 is the Proton donor of the active site.

The protein belongs to the OMP decarboxylase family. Type 2 subfamily.

The enzyme catalyses orotidine 5'-phosphate + H(+) = UMP + CO2. It participates in pyrimidine metabolism; UMP biosynthesis via de novo pathway; UMP from orotate: step 2/2. This is Orotidine 5'-phosphate decarboxylase from Clostridium botulinum (strain ATCC 19397 / Type A).